The chain runs to 1296 residues: Protein broad-minded (1296 aa).

Residues 1158–1281 form the Rab-GAP TBC domain; that stretch reads GIHPIYFCSA…YMENLEQNYR (124 aa).

Interacts with CDK20, which promotes CDK20 stability and function. Interacts with FAM149B1; may play a role in cilium assembly.

It localises to the cytoplasm. The protein localises to the cell projection. It is found in the cilium. Functionally, required for high-level Shh responses in the developing neural tube. Together with CDK20, controls the structure of the primary cilium by coordinating assembly of the ciliary membrane and axoneme, allowing GLI2 to be properly activated in response to Shh signaling. The polypeptide is Protein broad-minded (Tbc1d32) (Mus musculus (Mouse)).